The chain runs to 423 residues: Phosphoribosylamine--glycine ligase (423 aa).

One can recognise an ATP-grasp domain in the interval K107–D314. ATP is bound at residue V133–S194. 2 residues coordinate Mg(2+): E284 and N286.

Belongs to the GARS family. Mg(2+) is required as a cofactor. It depends on Mn(2+) as a cofactor.

It catalyses the reaction 5-phospho-beta-D-ribosylamine + glycine + ATP = N(1)-(5-phospho-beta-D-ribosyl)glycinamide + ADP + phosphate + H(+). The protein operates within purine metabolism; IMP biosynthesis via de novo pathway; N(1)-(5-phospho-D-ribosyl)glycinamide from 5-phospho-alpha-D-ribose 1-diphosphate: step 2/2. This is Phosphoribosylamine--glycine ligase from Neisseria meningitidis serogroup B (strain ATCC BAA-335 / MC58).